Here is a 399-residue protein sequence, read N- to C-terminus: Tyrosine--tRNA ligase 2 (399 aa).

The 'HIGH' region motif lies at 43-52 (PTAPDLHLGH). The short motif at 227–231 (KMSKS) is the 'KMSKS' region element. ATP is bound at residue Lys230. The region spanning 338–398 (ITLLDLCSVA…IGKRYKFRIG (61 aa)) is the S4 RNA-binding domain.

It belongs to the class-I aminoacyl-tRNA synthetase family. TyrS type 2 subfamily. Homodimer.

The protein localises to the cytoplasm. It carries out the reaction tRNA(Tyr) + L-tyrosine + ATP = L-tyrosyl-tRNA(Tyr) + AMP + diphosphate + H(+). Catalyzes the attachment of tyrosine to tRNA(Tyr) in a two-step reaction: tyrosine is first activated by ATP to form Tyr-AMP and then transferred to the acceptor end of tRNA(Tyr). The sequence is that of Tyrosine--tRNA ligase 2 from Photorhabdus laumondii subsp. laumondii (strain DSM 15139 / CIP 105565 / TT01) (Photorhabdus luminescens subsp. laumondii).